A 259-amino-acid polypeptide reads, in one-letter code: MLLKAASTFSLLNIHGEKKDISPLFSSSSSISSPVSSGKSGNLSFPLRASKSSTTTTSTLSGVVFEPFEEVKKEMDLVPSGQQLSLARHLYSPECEAAVNEQINVEYNVSYVYHALYAYFDRDNVALKGLAKFFKESSVEEREHAELLMEYQNKRGGRVKLQPMVLPQSEFDHPEKGDALYAMELALSLEKLVNEKLLNLHSVASKNDDVQLADFIESVFLNEQVEAIKKISEYVSQLRRLGKGHGTWHFDQELLGAAA.

A chloroplast-targeting transit peptide spans 1 to 49 (MLLKAASTFSLLNIHGEKKDISPLFSSSSSISSPVSSGKSGNLSFPLRA). The extension peptide (EP) stretch occupies residues 50-88 (SKSSTTTTSTLSGVVFEPFEEVKKEMDLVPSGQQLSLAR). Residues 89-242 (HLYSPECEAA…EYVSQLRRLG (154 aa)) enclose the Ferritin-like diiron domain. Fe cation is bound by residues glutamate 106, glutamate 141, histidine 144, glutamate 190, and glutamine 224.

The protein belongs to the ferritin family. As to quaternary structure, oligomer of 24 subunits. There are two types of subunits: L (light) chain and H (heavy) chain. The major chain can be light or heavy, depending on the species and tissue type. The functional molecule forms a roughly spherical shell with a diameter of 12 nm and contains a central cavity into which the insoluble mineral iron core is deposited.

Its subcellular location is the plastid. It localises to the chloroplast. The catalysed reaction is 4 Fe(2+) + O2 + 4 H(+) = 4 Fe(3+) + 2 H2O. In terms of biological role, stores iron in a soluble, non-toxic, readily available form. Important for iron homeostasis. Has ferroxidase activity. Iron is taken up in the ferrous form and deposited as ferric hydroxides after oxidation. This is Ferritin-3, chloroplastic (FER3) from Arabidopsis thaliana (Mouse-ear cress).